The chain runs to 250 residues: MSNDPTHQFLVNKIVSIDIGGIDFSFTNASLFMVATVGAAAGFLYLTTSQRGLIPTRMQSVSEMSYEFIASMLREGAGSQGMKFFPMVFSLFMFILTANLLGMVPYFFTVTSQIIVTFALAVFVIGTVILYGFYKHGFGFLKLFVPHGVPGALLPLVVAIEIISFLSRPISLSVRLFANMLAGHITLKVFAGFVASLSAFGALGIGGAILPLIMTVALTGLEFLVAFLQAYVFAVLTCMYLNDAVHPGSH.

The next 6 membrane-spanning stretches (helical) occupy residues 26-46, 84-104, 114-134, 143-163, 193-213, and 216-236; these read FTNA…FLYL, FFPM…LGMV, IIVT…YGFY, LFVP…IEII, FVAS…LPLI, and VALT…FAVL.

This sequence belongs to the ATPase A chain family. F-type ATPases have 2 components, CF(1) - the catalytic core - and CF(0) - the membrane proton channel. CF(1) has five subunits: alpha(3), beta(3), gamma(1), delta(1), epsilon(1). CF(0) has three main subunits: a(1), b(2) and c(9-12). The alpha and beta chains form an alternating ring which encloses part of the gamma chain. CF(1) is attached to CF(0) by a central stalk formed by the gamma and epsilon chains, while a peripheral stalk is formed by the delta and b chains.

The protein localises to the cell inner membrane. Key component of the proton channel; it plays a direct role in the translocation of protons across the membrane. This Sinorhizobium medicae (strain WSM419) (Ensifer medicae) protein is ATP synthase subunit a.